The chain runs to 290 residues: Large ribosomal subunit protein uL2m (290 aa).

Belongs to the universal ribosomal protein uL2 family. As to quaternary structure, probably part of the large ribosomal subunit.

It localises to the hydrogenosome. The sequence is that of Large ribosomal subunit protein uL2m (rpl2) from Nyctotherus ovalis.